The following is a 141-amino-acid chain: Cytochrome c-type biogenesis protein CcmE (141 aa).

At 1-7 (MRARTRR) the chain is on the cytoplasmic side. A helical; Signal-anchor for type II membrane protein membrane pass occupies residues 8-28 (LYTFGIAAALIVAAAALAFFA). Residues 29 to 141 (LRENANLFYT…RELKPLEAGG (113 aa)) lie on the Periplasmic side of the membrane. Residues histidine 125 and tyrosine 129 each contribute to the heme site.

Belongs to the CcmE/CycJ family.

It is found in the cell inner membrane. In terms of biological role, heme chaperone required for the biogenesis of c-type cytochromes. Transiently binds heme delivered by CcmC and transfers the heme to apo-cytochromes in a process facilitated by CcmF and CcmH. This is Cytochrome c-type biogenesis protein CcmE from Hyphomonas neptunium (strain ATCC 15444).